Consider the following 176-residue polypeptide: MEVATLGGGCFWCTEAVFKRVKGVVSVKPGYSGGKVPNPTYEEVCTDETGHAEVVQITFDPSVITYRELLEIFFEIHDPTTPNRQGNDVGSQYRSIILYHSEEQKKIAEEMIKLYERKLGKKVVTELVPFEAFYEAEDYHHDFYDKHKNYPYCKLVIDPKVKKFMKNFPDKASIRI.

Cys-10 is an active-site residue.

Belongs to the MsrA Met sulfoxide reductase family.

The catalysed reaction is L-methionyl-[protein] + [thioredoxin]-disulfide + H2O = L-methionyl-(S)-S-oxide-[protein] + [thioredoxin]-dithiol. The enzyme catalyses [thioredoxin]-disulfide + L-methionine + H2O = L-methionine (S)-S-oxide + [thioredoxin]-dithiol. In terms of biological role, has an important function as a repair enzyme for proteins that have been inactivated by oxidation. Catalyzes the reversible oxidation-reduction of methionine sulfoxide in proteins to methionine. The protein is Peptide methionine sulfoxide reductase MsrA of Sulfolobus acidocaldarius (strain ATCC 33909 / DSM 639 / JCM 8929 / NBRC 15157 / NCIMB 11770).